The sequence spans 673 residues: Putative K(+)-stimulated pyrophosphate-energized sodium pump (673 aa).

The next 5 membrane-spanning stretches (helical) occupy residues Ser-3–Ser-23, Ile-62–Ile-82, Gly-84–Val-104, Val-127–Phe-147, and Val-154–Ile-174. Lys-177 is a binding site for substrate. 4 residues coordinate Mg(2+): Asp-180, Asp-184, Asn-207, and Asp-210. The next 6 helical transmembrane spans lie at Leu-222–Ala-242, Val-247–Phe-267, Ala-279–Ser-299, Ile-302–Ile-322, Leu-364–Gly-384, and Ala-387–Leu-407. Asp-419 is a binding site for Mg(2+). The next 4 helical transmembrane spans lie at Ala-449–Ala-469, Val-486–Met-506, Glu-553–Gly-573, and Ala-576–Ser-596. Positions 603, 629, and 633 each coordinate Ca(2+). Lys-636 contacts substrate. Residues Ile-652–Ile-672 traverse the membrane as a helical segment.

The protein belongs to the H(+)-translocating pyrophosphatase (TC 3.A.10) family. K(+)-stimulated subfamily. In terms of assembly, homodimer. Mg(2+) serves as cofactor.

The protein resides in the cell membrane. It catalyses the reaction Na(+)(in) + diphosphate + H2O = Na(+)(out) + 2 phosphate + H(+). Its activity is regulated as follows. Requires K(+) for maximal activity. In terms of biological role, sodium pump that utilizes the energy of pyrophosphate hydrolysis as the driving force for Na(+) movement across the membrane. This chain is Putative K(+)-stimulated pyrophosphate-energized sodium pump, found in Clostridium tetani (strain Massachusetts / E88).